Reading from the N-terminus, the 21-residue chain is Pseudogermin (21 aa).

This sequence belongs to the germin family. As to quaternary structure, homotetramer.

Its subcellular location is the secreted. The protein localises to the extracellular space. It localises to the apoplast. It is found in the cell wall. In terms of biological role, may subsume the role of germin at the low water potentials during embryogenesis. The polypeptide is Pseudogermin (Triticum aestivum (Wheat)).